We begin with the raw amino-acid sequence, 197 residues long: Rac-like GTP-binding protein 5 (197 aa).

Residue 13–20 (GDGAVGKT) participates in GTP binding. The Effector region signature appears at 35–43 (YVPTVFDNF). Residues 60 to 64 (DTAGQ) and 118 to 121 (TKLD) each bind GTP. C194 carries the post-translational modification Cysteine methyl ester. The S-geranylgeranyl cysteine moiety is linked to residue C194. Positions 195–197 (AIL) are cleaved as a propeptide — removed in mature form.

The protein belongs to the small GTPase superfamily. Rho family.

The protein resides in the cytoplasm. It is found in the membrane. Functionally, inactive GDP-bound Rho GTPases reside in the cytosol, are found in a complex with Rho GDP-dissociation inhibitors (Rho GDIs), and are released from the GDI protein in order to translocate to membranes upon activation. This is Rac-like GTP-binding protein 5 (RAC5) from Oryza sativa subsp. japonica (Rice).